A 229-amino-acid chain; its full sequence is Phosphoglycolate phosphatase (229 aa).

Residue aspartate 18 is the Nucleophile of the active site. Residues aspartate 18, aspartate 20, and aspartate 176 each contribute to the Mg(2+) site.

Belongs to the HAD-like hydrolase superfamily. CbbY/CbbZ/Gph/YieH family. Mg(2+) is required as a cofactor.

It carries out the reaction 2-phosphoglycolate + H2O = glycolate + phosphate. It participates in organic acid metabolism; glycolate biosynthesis; glycolate from 2-phosphoglycolate: step 1/1. Its function is as follows. Specifically catalyzes the dephosphorylation of 2-phosphoglycolate. Is involved in the dissimilation of the intracellular 2-phosphoglycolate formed during the DNA repair of 3'-phosphoglycolate ends, a major class of DNA lesions induced by oxidative stress. In Xylella fastidiosa (strain Temecula1 / ATCC 700964), this protein is Phosphoglycolate phosphatase.